Here is a 448-residue protein sequence, read N- to C-terminus: Multiple inositol polyphosphate phosphatase 1 (448 aa).

An N-terminal signal peptide occupies residues 1–19 (MAPRRAACLLPLLVAVASA). The active site involves His69. N-linked (GlcNAc...) asparagine glycans are attached at residues Asn203, Asn257, Asn409, and Asn441. Residues 445–448 (ADEL) carry the Prevents secretion from ER motif.

The protein belongs to the histidine acid phosphatase family. MINPP1 subfamily. In terms of processing, N-glycosylated. In terms of tissue distribution, present in growth plate chondrocytes but not detectable in articular chondrocytes (at protein level). Spatially restricted to chondrocytes in the lower portion of the proliferative zone and the upper portion of the hypertrophic zone in the growth plate of long bones (at protein level). Weakly expressed in kidney, liver, lung, skin and spleen, and not detected in brain, heart and muscle.

The protein resides in the endoplasmic reticulum lumen. It localises to the secreted. Its subcellular location is the cell membrane. It carries out the reaction 1D-myo-inositol hexakisphosphate + H2O = 1D-myo-inositol 1,2,4,5,6-pentakisphosphate + phosphate. The catalysed reaction is 1D-myo-inositol 1,2,4,5,6-pentakisphosphate + H2O = 1D-myo-inositol 1,2,5,6-tetrakisphosphate + phosphate. The enzyme catalyses 1D-myo-inositol 1,2,5,6-tetrakisphosphate + H2O = 1D-myo-inositol 1,2,6-trisphosphate + phosphate. It catalyses the reaction 1D-myo-inositol 1,2,6-trisphosphate + H2O = 1D-myo-inositol 1,2-bisphosphate + phosphate. It carries out the reaction 1D-myo-inositol 1,2-bisphosphate + H2O = 1D-myo-inositol 2-phosphate + phosphate. The catalysed reaction is 1D-myo-inositol hexakisphosphate + H2O = 1D-myo-inositol 1,2,3,5,6-pentakisphosphate + phosphate. The enzyme catalyses 1D-myo-inositol 1,2,3,5,6-pentakisphosphate + H2O = 1D-myo-inositol 1,2,3,6-tetrakisphosphate + phosphate. It catalyses the reaction 1D-myo-inositol 1,2,3,6-tetrakisphosphate + H2O = 1D-myo-inositol 1,2,3-trisphosphate + phosphate. It carries out the reaction 1D-myo-inositol 1,2,3-trisphosphate + H2O = 1D-myo-inositol 2,3-bisphosphate + phosphate. The catalysed reaction is 1D-myo-inositol 2,3-bisphosphate + H2O = 1D-myo-inositol 2-phosphate + phosphate. The enzyme catalyses 1D-myo-inositol 1,3,4,5,6-pentakisphosphate + H2O = 1D-myo-inositol 1,4,5,6-tetrakisphosphate + phosphate. It catalyses the reaction 1D-myo-inositol 1,4,5,6-tetrakisphosphate + H2O = 1D-myo-inositol 1,4,5-trisphosphate + phosphate. It carries out the reaction (2R)-2,3-bisphosphoglycerate + H2O = (2R)-2-phosphoglycerate + phosphate. In terms of biological role, multiple inositol polyphosphate phosphatase that hydrolyzes 1D-myo-inositol 1,3,4,5,6-pentakisphosphate (InsP5[2OH]) and 1D-myo-inositol hexakisphosphate (InsP6) to a range of less phosphorylated inositol phosphates. This regulates the availability of these various small molecule second messengers and metal chelators which control many aspects of cell physiology. Has a weak in vitro activity towards 1D-myo-inositol 1,4,5-trisphosphate which is unlikely to be physiologically relevant. By regulating intracellular inositol polyphosphates pools, which act as metal chelators, it may control the availability of intracellular calcium and iron, which are important for proper neuronal development and homeostasis. May have a dual substrate specificity, and function as a 2,3-bisphosphoglycerate 3-phosphatase hydrolyzing 2,3-bisphosphoglycerate to 2-phosphoglycerate. 2,3-bisphosphoglycerate (BPG) is formed as part of the Rapoport-Luebering glycolytic bypass and is a regulator of systemic oxygen homeostasis as the major allosteric effector of hemoglobin. The polypeptide is Multiple inositol polyphosphate phosphatase 1 (MINPP1) (Gallus gallus (Chicken)).